The following is a 379-amino-acid chain: MSHSSLHPSIPWPRGHKAKVAAFVLLIVCLAALWKLGEPSDHLLQWLVLHLASLHLRLLFKRVCCLAEELCHIHPRYQGNYSRAVRACLGCPIRYGAVLLLSCYFYVSLPNTVDLPLTWMLAHLGLSEALNILLGLQSLTPAEISTICEQRNFNVAHGLAWSYYIGYLQLILPGLRARIHTYNQLHSNTLQGVGSHRLYILFPLDCGVLDDLSAADPNIRFLHELPRQSADRAGIKGRVYTNSVYELLEKGKPVGTCVLEYATPLQTLFAMSQDGRAGFSQEDRLEQAKLFCRTLEDILADAPESQKNCRLIVYQEPTEESDFSLSQEILKHLRQEEREEVTMGTAGTFVAPGSSTLHQEPELLISGMDQPLPLRTDIF.

The next 3 membrane-spanning stretches (helical) occupy residues 20–40, 87–107, and 115–135; these read VAAF…GEPS, ACLG…YFYV, and LPLT…ILLG. 2 S-palmitoyl cysteine lipidation sites follow: Cys-88 and Cys-91. The cyclic dinucleotide-binding domain (CBD) stretch occupies residues 153–340; that stretch reads FNVAHGLAWS…KHLRQEEREE (188 aa). 2',3'-cGAMP-binding residues include Ser-162, Tyr-167, Arg-238, and Thr-263. Residues Ser-162, Tyr-167, 238–241, and Thr-263 each bind 3',3'-c-di-GMP; that span reads RVYT. Residues Tyr-167, Arg-238, and Thr-263 each contribute to the 2',3'-cUAMP site. Positions 340–379 are C-terminal tail (CTT); it reads EVTMGTAGTFVAPGSSTLHQEPELLISGMDQPLPLRTDIF. Residue Ser-355 is modified to Phosphoserine. Residue Thr-356 is modified to Phosphothreonine. The pLxIS motif signature appears at 363–366; it reads LLIS. Ser-366 bears the Phosphoserine; by TBK1 mark.

The protein belongs to the STING family. As to quaternary structure, homodimer; forms a homodimer in absence of cyclic nucleotide (c-di-GMP or cGAMP). Homotetramer; in presence of cyclic nucleotide (c-di-GMP or cGAMP), forms tetramers and higher-order oligomers through side-by-side packing. Interacts (when phosphorylated) with IRF3; following activation and phosphorylation on the pLxIS motif by TBK1, recruits IRF3. Interacts with TBK1; when homodimer, leading to subsequent production of IFN-beta. Interacts (via transmembrane domain) with TMEM203. Phosphorylation by TBK1 leads to activation and production of IFN-beta. Following cyclic nucleotide (c-di-GMP or cGAMP)-binding, activation and translocation from the endoplasmic reticulum, STING1 is phosphorylated by TBK1 at Ser-366 in the pLxIS motif. The phosphorylated pLxIS motif constitutes an IRF3-binding motif, leading to recruitment of the transcription factor IRF3 to induce type-I interferons and other cytokines. In contrast, lacks phosphorylation site at position 358, leading to reduced production of type-I interferons and other cytokines.

Its subcellular location is the endoplasmic reticulum membrane. The protein localises to the cytoplasm. It localises to the perinuclear region. It is found in the endoplasmic reticulum-Golgi intermediate compartment membrane. The protein resides in the golgi apparatus membrane. Its subcellular location is the cytoplasmic vesicle. The protein localises to the autophagosome membrane. It localises to the mitochondrion outer membrane. It is found in the cell membrane. The catalysed reaction is H(+)(in) = H(+)(out). In terms of biological role, facilitator of innate immune signaling that acts as a sensor of cytosolic DNA from bacteria and viruses and promotes low production of type I interferon (IFN-alpha and IFN-beta). Compared to other mammals, STING1-dependent type I interferon induction is strongly reduced in bats, suggesting that the cGAS-STING pathway promotes a limited inflammatory response. Innate immune response is triggered in response to non-CpG double-stranded DNA from viruses and bacteria delivered to the cytoplasm. Acts by binding cyclic dinucleotides: recognizes and binds cyclic di-GMP (c-di-GMP), a second messenger produced by bacteria, cyclic UMP-AMP (2',3'-cUAMP), and cyclic GMP-AMP (cGAMP), a messenger produced by CGAS in response to DNA virus in the cytosol. Upon binding to c-di-GMP, cUAMP or cGAMP, STING1 oligomerizes, translocates from the endoplasmic reticulum and is phosphorylated by TBK1 on the pLxIS motif, leading to recruitment and subsequent activation of the transcription factor IRF3 to induce expression of type I interferon and exert a potent anti-viral state. In addition to promote the production of type I interferons, plays a direct role in autophagy. Following cGAMP-binding, STING1 buds from the endoplasmic reticulum into COPII vesicles, which then form the endoplasmic reticulum-Golgi intermediate compartment (ERGIC). The ERGIC serves as the membrane source for WIPI2 recruitment and LC3 lipidation, leading to formation of autophagosomes that target cytosolic DNA or DNA viruses for degradation by the lysosome. Promotes autophagy by acting as a proton channel that directs proton efflux from the Golgi to facilitate MAP1LC3B/LC3B lipidation. The autophagy- and interferon-inducing activities can be uncoupled and autophagy induction is independent of TBK1 phosphorylation. The polypeptide is Stimulator of interferon genes protein (Eidolon helvum (Straw-colored fruit bat)).